A 747-amino-acid chain; its full sequence is Tripartite terminase subunit 3 (747 aa).

Positions 194–198 match the Nuclear localization signal motif; it reads KRAKV. The short motif at 267 to 274 is the Walker A motif element; sequence VPRRHGKT. Residues 361 to 366 carry the Walker B motif motif; that stretch reads LLFVDE. Glu366 (for ATPase activity) is an active-site residue. Residues Asp521, Glu593, and Asp722 each act as for nuclease activity in the active site.

It belongs to the herpesviridae TRM3 protein family. As to quaternary structure, interacts with the terminase subunits TRM1 and TRM2. Interacts with portal protein.

It is found in the host nucleus. Its function is as follows. Component of the molecular motor that translocates viral genomic DNA in empty capsid during DNA packaging. Forms a tripartite terminase complex together with TRM1 and TRM2 in the host cytoplasm. Once the complex reaches the host nucleus, it interacts with the capsid portal vertex. This portal forms a ring in which genomic DNA is translocated into the capsid. TRM3 carries an RNase H-like nuclease activity that plays an important role for the cleavage of concatemeric viral DNA into unit length genomes. This is Tripartite terminase subunit 3 from Homo sapiens (Human).